Here is a 308-residue protein sequence, read N- to C-terminus: MDLKLMKTRNVYFIFSTFMILFSLFSIFTKGFNLGIDFTGGNIYQMKFEKPVSKEAMDKTLKEMASKYPSLKSNKVQYSEGNTVLLRTQIADEKEKSAILEELKAEQGNYELIKADAVGAVVGNELAKNALWALALGSILILIYITIRFEWIYALSSVLALLHDVLVTIGFISFFQFEVDTPFIAAILTILGYSMNDTIVIFDRIRENDHKYGGKKPFADVIDESVNKVFIRSVYTSLTTLLALAALLIFGGSTLRTFNITLLVGIVYGTYSSIWLASPLVYLLRRFKKPPKQEKNGKKDRSMEKVVV.

6 consecutive transmembrane segments (helical) span residues 12-32, 127-147, 152-172, 182-202, 234-254, and 262-282; these read YFIF…TKGF, AKNA…YITI, IYAL…IGFI, PFIA…IVIF, VYTS…GGST, and LLVG…PLVY.

The protein belongs to the SecD/SecF family. SecF subfamily. In terms of assembly, forms a complex with SecD. Part of the essential Sec protein translocation apparatus which comprises SecA, SecYEG and auxiliary proteins SecDF. Other proteins may also be involved.

The protein localises to the cell inner membrane. Part of the Sec protein translocase complex. Interacts with the SecYEG preprotein conducting channel. SecDF uses the proton motive force (PMF) to complete protein translocation after the ATP-dependent function of SecA. The protein is Protein translocase subunit SecF of Sebaldella termitidis (strain ATCC 33386 / NCTC 11300).